Consider the following 387-residue polypeptide: tRNA N6-adenosine threonylcarbamoyltransferase (387 aa).

Fe cation contacts are provided by H112 and H116. Substrate contacts are provided by residues 134-138 (LASGG), D167, G180, and N325. D353 contacts Fe cation.

This sequence belongs to the KAE1 / TsaD family. Requires Fe(2+) as cofactor.

The protein localises to the cytoplasm. It catalyses the reaction L-threonylcarbamoyladenylate + adenosine(37) in tRNA = N(6)-L-threonylcarbamoyladenosine(37) in tRNA + AMP + H(+). Functionally, required for the formation of a threonylcarbamoyl group on adenosine at position 37 (t(6)A37) in tRNAs that read codons beginning with adenine. Is involved in the transfer of the threonylcarbamoyl moiety of threonylcarbamoyl-AMP (TC-AMP) to the N6 group of A37, together with TsaE and TsaB. TsaD likely plays a direct catalytic role in this reaction. The protein is tRNA N6-adenosine threonylcarbamoyltransferase of Rickettsia typhi (strain ATCC VR-144 / Wilmington).